Here is a 535-residue protein sequence, read N- to C-terminus: Portal protein (535 aa).

It belongs to the podoviridae portal protein family. As to quaternary structure, homododecamer. Interacts with major capsid protein. Interacts with the tail tube proteins gp11 and gp12. Interacts with the terminase large subunit. Interacts with the internal virion protein gp14.

The protein resides in the virion. Forms the portal vertex of the capsid. This portal plays critical roles in head assembly, genome packaging, neck/tail attachment, and genome ejection. The portal protein multimerizes as a single ring-shaped homododecamer arranged around a central channel. The sequence is that of Portal protein (8) from Enterobacteria phage T3 (Bacteriophage T3).